A 180-amino-acid polypeptide reads, in one-letter code: Chromatin structure-remodeling complex protein RSC14 (180 aa).

As to quaternary structure, interacts with STH1, RSC3 and ARP9. Component of the two forms of the RSC complex composed of at least either RSC1 or RSC2, and ARP7, ARP9, LDB7, NPL6, RSC3, RSC30, RSC4, RSC58, RSC6, RSC8, RSC9, SFH1, STH1, HTL1 and probably RTT102. The complexes interact with histone and histone variant components of centromeric chromatin. Component of a fungal-specific module (HTL1-LDB7-NPL6-RSC3-RSC30) within the RSC complex.

Its subcellular location is the nucleus. Functionally, component of the chromatin structure-remodeling complex (RSC), which is involved in transcription regulation and nucleosome positioning. RSC is responsible for the transfer of a histone octamer from a nucleosome core particle to naked DNA. The reaction requires ATP and involves an activated RSC-nucleosome intermediate. Remodeling reaction also involves DNA translocation, DNA twist and conformational change. As a reconfigurer of centromeric and flanking nucleosomes, RSC complex is required both for proper kinetochore function in chromosome segregation and, via a PKC1-dependent signaling pathway, for organization of the cellular cytoskeleton. Together with HTL1, NPL6, RSC3, RSC30 components, defines a fungal-specific module within the RSC complex that plays a role in many cellular functions including the maintenance of cell wall integrity. May be involved in the transfer of mannosylphosphate (MP) groups into N-linked oligosaccharides. The polypeptide is Chromatin structure-remodeling complex protein RSC14 (LDB7) (Saccharomyces cerevisiae (strain ATCC 204508 / S288c) (Baker's yeast)).